The primary structure comprises 564 residues: Dihydroxy-acid dehydratase (564 aa).

[2Fe-2S] cluster is bound at residue Cys53. Asp85 is a binding site for Mg(2+). Cys126 contributes to the [2Fe-2S] cluster binding site. Mg(2+) is bound by residues Asp127 and Lys128. Residue Lys128 is modified to N6-carboxylysine. Cys203 contacts [2Fe-2S] cluster. Residue Glu454 participates in Mg(2+) binding. Ser480 functions as the Proton acceptor in the catalytic mechanism.

This sequence belongs to the IlvD/Edd family. Homodimer. Requires [2Fe-2S] cluster as cofactor. It depends on Mg(2+) as a cofactor.

The enzyme catalyses (2R)-2,3-dihydroxy-3-methylbutanoate = 3-methyl-2-oxobutanoate + H2O. The catalysed reaction is (2R,3R)-2,3-dihydroxy-3-methylpentanoate = (S)-3-methyl-2-oxopentanoate + H2O. Its pathway is amino-acid biosynthesis; L-isoleucine biosynthesis; L-isoleucine from 2-oxobutanoate: step 3/4. It functions in the pathway amino-acid biosynthesis; L-valine biosynthesis; L-valine from pyruvate: step 3/4. In terms of biological role, functions in the biosynthesis of branched-chain amino acids. Catalyzes the dehydration of (2R,3R)-2,3-dihydroxy-3-methylpentanoate (2,3-dihydroxy-3-methylvalerate) into 2-oxo-3-methylpentanoate (2-oxo-3-methylvalerate) and of (2R)-2,3-dihydroxy-3-methylbutanoate (2,3-dihydroxyisovalerate) into 2-oxo-3-methylbutanoate (2-oxoisovalerate), the penultimate precursor to L-isoleucine and L-valine, respectively. The protein is Dihydroxy-acid dehydratase of Mycobacterium ulcerans (strain Agy99).